A 523-amino-acid chain; its full sequence is BTB/POZ domain-containing protein 3 (523 aa).

The stretch at 85-114 (FDYSPLVLASLCGHEPVVKFLLENGALCER) is one ANK repeat. 2 BTB domains span residues 167-223 (TDIV…RYLY) and 306-373 (HDAY…DIAP).

Interacts with cul3. Ubiquitinated and targeted for cul3-dependent degradation.

The protein localises to the cytoplasm. Its pathway is protein modification; protein ubiquitination. Its function is as follows. Probable substrate-specific adapter of an E3 ubiquitin-protein ligase complex which mediates the ubiquitination and subsequent proteasomal degradation of target proteins. The protein is BTB/POZ domain-containing protein 3 (btb3) of Schizosaccharomyces pombe (strain 972 / ATCC 24843) (Fission yeast).